A 246-amino-acid polypeptide reads, in one-letter code: Proteasome subunit alpha type-6-B (246 aa).

It belongs to the peptidase T1A family. In terms of assembly, component of the 20S core complex of the 26S proteasome. The 26S proteasome is composed of a core protease (CP), known as the 20S proteasome, capped at one or both ends by the 19S regulatory particle (RP/PA700). The 20S proteasome core is composed of 28 subunits that are arranged in four stacked rings, resulting in a barrel-shaped structure. The two end rings are each formed by seven alpha subunits, and the two central rings are each formed by seven beta subunits. The catalytic chamber with the active sites is on the inside of the barrel.

The protein localises to the cytoplasm. It localises to the nucleus. In terms of biological role, the proteasome is a multicatalytic proteinase complex which is characterized by its ability to cleave peptides with Arg, Phe, Tyr, Leu, and Glu adjacent to the leaving group at neutral or slightly basic pH. The proteasome has an ATP-dependent proteolytic activity. This chain is Proteasome subunit alpha type-6-B (PAA2), found in Arabidopsis thaliana (Mouse-ear cress).